The primary structure comprises 329 residues: Flotillin-like protein FloA (329 aa).

A run of 2 helical transmembrane segments spans residues 4–24 and 27–47; these read FIPF…ILSF and VGLW…TLVG.

It belongs to the flotillin-like FloA family. Homooligomerizes.

It is found in the cell membrane. The protein resides in the membrane raft. Functionally, found in functional membrane microdomains (FMM) that may be equivalent to eukaryotic membrane rafts. FMMs are highly dynamic and increase in number as cells age. Flotillins are thought to be important factors in membrane fluidity. The sequence is that of Flotillin-like protein FloA from Alkaliphilus metalliredigens (strain QYMF).